The sequence spans 178 residues: ATP synthase subunit delta (178 aa).

It belongs to the ATPase delta chain family. In terms of assembly, F-type ATPases have 2 components, F(1) - the catalytic core - and F(0) - the membrane proton channel. F(1) has five subunits: alpha(3), beta(3), gamma(1), delta(1), epsilon(1). F(0) has three main subunits: a(1), b(2) and c(10-14). The alpha and beta chains form an alternating ring which encloses part of the gamma chain. F(1) is attached to F(0) by a central stalk formed by the gamma and epsilon chains, while a peripheral stalk is formed by the delta and b chains.

It localises to the cell inner membrane. In terms of biological role, f(1)F(0) ATP synthase produces ATP from ADP in the presence of a proton or sodium gradient. F-type ATPases consist of two structural domains, F(1) containing the extramembraneous catalytic core and F(0) containing the membrane proton channel, linked together by a central stalk and a peripheral stalk. During catalysis, ATP synthesis in the catalytic domain of F(1) is coupled via a rotary mechanism of the central stalk subunits to proton translocation. Its function is as follows. This protein is part of the stalk that links CF(0) to CF(1). It either transmits conformational changes from CF(0) to CF(1) or is implicated in proton conduction. This chain is ATP synthase subunit delta, found in Teredinibacter turnerae (strain ATCC 39867 / T7901).